The chain runs to 777 residues: Semaphorin-3D (777 aa).

An N-terminal signal peptide occupies residues 1-37 (MNVTKDENPRSRSQDLHLFHAWMMLIMTVLFLPVTET). The 488-residue stretch at 44–531 (RLKLTYKDLL…SWDGLVQLSL (488 aa)) folds into the Sema domain. An intrachain disulfide couples C117 to C128. N139 is a glycosylation site (N-linked (GlcNAc...) asparagine). Cystine bridges form between C146-C155, C286-C398, C310-C358, and C534-C552. Residues 533–585 (RCDTYGKACADCCLARDPYCAWDGNACSRYAPTSKRRARRQDVKYGDPITQCW) form the PSI domain. Residues 592–680 (SHETADEKVI…TFIHTIVKLT (89 aa)) enclose the Ig-like C2-type domain. N607 and N724 each carry an N-linked (GlcNAc...) asparagine glycan. Cysteines 665 and 731 form a disulfide. Over residues 740–765 (RRQRNKGSPKWKHMQEMKKKRNRRHH) the composition is skewed to basic residues. The disordered stretch occupies residues 740 to 777 (RRQRNKGSPKWKHMQEMKKKRNRRHHRDLDELQRSVAT). A compositionally biased stretch (basic and acidic residues) spans 766-777 (RDLDELQRSVAT).

This sequence belongs to the semaphorin family.

It localises to the secreted. Its function is as follows. Induces the collapse and paralysis of neuronal growth cones. Could potentially act as repulsive cues toward specific neuronal populations. Binds to neuropilin. The polypeptide is Semaphorin-3D (Sema3d) (Mus musculus (Mouse)).